A 361-amino-acid chain; its full sequence is uncharacterized protein (361 aa).

2 disordered regions span residues 53–75 (KNIS…NINN) and 150–211 (NYNN…YHHY). Positions 150 to 198 (NYNNYNNNNNNNNNNNNNNNNNNNNNNNNNNNNNNKNNNKNNNNKPNNF) are enriched in low complexity. Basic residues predominate over residues 199–211 (IHHHHHHHHYHHY). Residues 225 to 245 (IFIGLMAFLILFILMVIGLLI) form a helical membrane-spanning segment.

It localises to the membrane. This is an uncharacterized protein from Dictyostelium discoideum (Social amoeba).